A 175-amino-acid chain; its full sequence is Crossover junction endodeoxyribonuclease RuvC (175 aa).

Residues Asp-16, Glu-76, and Asp-148 contribute to the active site. Residues Asp-16, Glu-76, and Asp-148 each coordinate Mg(2+).

The protein belongs to the RuvC family. Homodimer which binds Holliday junction (HJ) DNA. The HJ becomes 2-fold symmetrical on binding to RuvC with unstacked arms; it has a different conformation from HJ DNA in complex with RuvA. In the full resolvosome a probable DNA-RuvA(4)-RuvB(12)-RuvC(2) complex forms which resolves the HJ. Mg(2+) serves as cofactor.

Its subcellular location is the cytoplasm. The catalysed reaction is Endonucleolytic cleavage at a junction such as a reciprocal single-stranded crossover between two homologous DNA duplexes (Holliday junction).. Functionally, the RuvA-RuvB-RuvC complex processes Holliday junction (HJ) DNA during genetic recombination and DNA repair. Endonuclease that resolves HJ intermediates. Cleaves cruciform DNA by making single-stranded nicks across the HJ at symmetrical positions within the homologous arms, yielding a 5'-phosphate and a 3'-hydroxyl group; requires a central core of homology in the junction. The consensus cleavage sequence is 5'-(A/T)TT(C/G)-3'. Cleavage occurs on the 3'-side of the TT dinucleotide at the point of strand exchange. HJ branch migration catalyzed by RuvA-RuvB allows RuvC to scan DNA until it finds its consensus sequence, where it cleaves and resolves the cruciform DNA. This chain is Crossover junction endodeoxyribonuclease RuvC, found in Rhodopseudomonas palustris (strain BisB18).